The following is a 652-amino-acid chain: DNA ligase (652 aa).

NAD(+) contacts are provided by residues 29-33, 78-79, and E107; these read DAEYD and SL. K109 (N6-AMP-lysine intermediate) is an active-site residue. NAD(+) is bound by residues R130, E164, K278, and K302. Residues C395, C398, C413, and C418 each coordinate Zn(2+). Residues 577 to 652 form the BRCT domain; it reads TDDAILSGKT…VKDEAWLLDL (76 aa).

It belongs to the NAD-dependent DNA ligase family. LigA subfamily. Mg(2+) serves as cofactor. Requires Mn(2+) as cofactor.

It catalyses the reaction NAD(+) + (deoxyribonucleotide)n-3'-hydroxyl + 5'-phospho-(deoxyribonucleotide)m = (deoxyribonucleotide)n+m + AMP + beta-nicotinamide D-nucleotide.. DNA ligase that catalyzes the formation of phosphodiester linkages between 5'-phosphoryl and 3'-hydroxyl groups in double-stranded DNA using NAD as a coenzyme and as the energy source for the reaction. It is essential for DNA replication and repair of damaged DNA. This Streptococcus thermophilus (strain ATCC BAA-491 / LMD-9) protein is DNA ligase.